The following is a 133-amino-acid chain: Probable mitochondrial pyruvate carrier 2 (133 aa).

The next 3 helical transmembrane spans lie at valine 39–isoleucine 55, alanine 73–serine 91, and methionine 99–tyrosine 116.

Belongs to the mitochondrial pyruvate carrier (MPC) (TC 2.A.105) family.

It localises to the mitochondrion inner membrane. Functionally, may mediate the uptake of pyruvate into mitochondria. The polypeptide is Probable mitochondrial pyruvate carrier 2 (Dictyostelium discoideum (Social amoeba)).